The sequence spans 329 residues: MSAYIIETLIKILILVAVFSALGGFATYIERKVLAYFQRRLGPCYVGPFGLLQVAADGIKLFTKEDIIPQGANKFIFTLAPIIAMVSAFVSMAPIPFFPNFTLFGYEIKPLISDINIGFLFFLAVGSAGIYAPILAGLASNNKYSLIGSARATIQLLSFEVVSTLTILAPLMVVGSLSLVEINHYQSGGFLDWLVFKQPLAFVLFLIASYAELNRTPFDLLEHEAEIVAGYCTEYSGLKWGMFFLAEYAHLFAFSFVISIVFFGGFNAWGFIPGGIAILIKAGFFVFLSMWVRATYPHVRPDQLMNMCWKIMLPLALLNIVLTGIVILI.

A run of 9 helical transmembrane segments spans residues 9 to 29 (LIKILILVAVFSALGGFATYI), 42 to 62 (GPCYVGPFGLLQVAADGIKLF), 75 to 95 (FIFTLAPIIAMVSAFVSMAPI), 117 to 137 (IGFLFFLAVGSAGIYAPILAG), 154 to 174 (IQLLSFEVVSTLTILAPLMVV), 188 to 208 (GGFLDWLVFKQPLAFVLFLIA), 238 to 258 (LKWGMFFLAEYAHLFAFSFVI), 269 to 291 (WGFIPGGIAILIKAGFFVFLSMW), and 309 to 329 (WKIMLPLALLNIVLTGIVILI).

The protein belongs to the complex I subunit 1 family. As to quaternary structure, NDH-1 is composed of 14 different subunits. Subunits NuoA, H, J, K, L, M, N constitute the membrane sector of the complex.

Its subcellular location is the cell inner membrane. It catalyses the reaction a quinone + NADH + 5 H(+)(in) = a quinol + NAD(+) + 4 H(+)(out). NDH-1 shuttles electrons from NADH, via FMN and iron-sulfur (Fe-S) centers, to quinones in the respiratory chain. The immediate electron acceptor for the enzyme in this species is believed to be ubiquinone. Couples the redox reaction to proton translocation (for every two electrons transferred, four hydrogen ions are translocated across the cytoplasmic membrane), and thus conserves the redox energy in a proton gradient. This subunit may bind ubiquinone. The polypeptide is NADH-quinone oxidoreductase subunit H (Helicobacter pylori (strain J99 / ATCC 700824) (Campylobacter pylori J99)).